We begin with the raw amino-acid sequence, 331 residues long: Flotillin-like protein FloA (331 aa).

The next 2 helical transmembrane spans lie at 6 to 26 and 28 to 48; these read LMIL…FTFV and VMLW…TLVG. Residues 236–331 are required for correct localization; that stretch reads QTDQAEADKN…KDPSDEDRKS (96 aa). 4 short sequence motifs (EA repeat) span residues 240-242, 251-253, 278-282, and 288-290; these read AEA, AEE, and EAEAE. The tract at residues 312-331 is disordered; the sequence is EMRDSFGKLTKDPSDEDRKS.

The protein belongs to the flotillin-like FloA family. Homooligomerizes. Interacts with FloT. Interacts with FtsH midcell. Interacts with PhoR, colocalizes with PhoR in FloA-only membrane rafts.

Its subcellular location is the cell membrane. The protein resides in the membrane raft. Found in functional membrane microdomains (FMM) that may be equivalent to eukaryotic membrane rafts. FMMs are highly dynamic and increase in number as cells age. FloA and FloT function is partially redundant; double deletions have marked synthetic phenotypes. Flotillins are thought to be important factors in membrane fluidity, especially during periods of rapid growth in rich media. Whether specific proteins are associated with FMMs is controversial; in one study FloT rafts have been shown to include proteins involved in adaptation to stationary phase, while FloA-FloT rafts include proteins involved in differentiation including sporulation, biofilm formation and DNA uptake competence. Another (more finely resolved) study only showed association of NfeD2 with FloT rafts of all the proteins examined. Involved in spatial organization of membranes, perhaps recruiting proteins to specific membrane regions. Simultaneous overexpression of both FloA and FloT leads to defects in cell division and differentiation, in part caused by stabilization of FtsH and its subsequent increased ability to degrade proteins. Cells make more biofilm, are about half as long, have less EzrA and more frequent Z-rings. In Bacillus subtilis (strain 168), this protein is Flotillin-like protein FloA.